The chain runs to 443 residues: Exodeoxyribonuclease 7 large subunit (443 aa).

It belongs to the XseA family. In terms of assembly, heterooligomer composed of large and small subunits.

It is found in the cytoplasm. It catalyses the reaction Exonucleolytic cleavage in either 5'- to 3'- or 3'- to 5'-direction to yield nucleoside 5'-phosphates.. In terms of biological role, bidirectionally degrades single-stranded DNA into large acid-insoluble oligonucleotides, which are then degraded further into small acid-soluble oligonucleotides. In Legionella pneumophila (strain Lens), this protein is Exodeoxyribonuclease 7 large subunit.